The chain runs to 160 residues: Single-stranded DNA-binding protein 2 (160 aa).

Residues 2–104 (MNRVVLVGRL…VVAESVQFLE (103 aa)) enclose the SSB domain. Residues 107–160 (NNNVEGATSNNYQNKANYSNNNQTSSYRADTSQKSDSFASEGKPIDINEDDLPF) form a disordered region. Positions 115–129 (SNNYQNKANYSNNNQ) are enriched in low complexity. Residues 130–144 (TSSYRADTSQKSDSF) show a composition bias toward polar residues. The Important for interaction with partner proteins signature appears at 155 to 160 (EDDLPF).

In terms of assembly, homotetramer.

In terms of biological role, plays an important role in DNA replication, recombination and repair. Binds to ssDNA and to an array of partner proteins to recruit them to their sites of action during DNA metabolism. The chain is Single-stranded DNA-binding protein 2 (ssb2) from Listeria monocytogenes serovar 1/2a (strain ATCC BAA-679 / EGD-e).